Here is a 305-residue protein sequence, read N- to C-terminus: UDP-3-O-acyl-N-acetylglucosamine deacetylase (305 aa).

The Zn(2+) site is built by H78, H237, and D241. The active-site Proton donor is the H264.

This sequence belongs to the LpxC family. It depends on Zn(2+) as a cofactor.

It carries out the reaction a UDP-3-O-[(3R)-3-hydroxyacyl]-N-acetyl-alpha-D-glucosamine + H2O = a UDP-3-O-[(3R)-3-hydroxyacyl]-alpha-D-glucosamine + acetate. It functions in the pathway glycolipid biosynthesis; lipid IV(A) biosynthesis; lipid IV(A) from (3R)-3-hydroxytetradecanoyl-[acyl-carrier-protein] and UDP-N-acetyl-alpha-D-glucosamine: step 2/6. Its function is as follows. Catalyzes the hydrolysis of UDP-3-O-myristoyl-N-acetylglucosamine to form UDP-3-O-myristoylglucosamine and acetate, the committed step in lipid A biosynthesis. The protein is UDP-3-O-acyl-N-acetylglucosamine deacetylase of Cupriavidus metallidurans (strain ATCC 43123 / DSM 2839 / NBRC 102507 / CH34) (Ralstonia metallidurans).